The primary structure comprises 458 residues: Divalent metal cation transporter MntH (458 aa).

11 helical membrane passes run Gly38–Met58, Ser76–Ala96, Gly119–Ile139, Met151–Met171, Ala180–Ala200, Met223–Gly243, Leu275–Gly295, Ile315–Ser335, Leu370–Ile390, Leu393–Val413, and Phe437–Val457.

Belongs to the NRAMP family.

Its subcellular location is the cell membrane. H(+)-stimulated, divalent metal cation uptake system. This is Divalent metal cation transporter MntH from Lacticaseibacillus casei (strain BL23) (Lactobacillus casei).